A 1763-amino-acid polypeptide reads, in one-letter code: Non-reducing polyketide synthase PKS19 (1763 aa).

Positions 20 to 261 (GDQRNLFRKL…PMKKVQGMWH (242 aa)) are N-terminal acylcarrier protein transacylase domain (SAT). Residues 390 to 822 (SSKIAVVGMA…GGNTSIIIEE (433 aa)) form the Ketosynthase family 3 (KS3) domain. Catalysis depends on for beta-ketoacyl synthase activity residues Cys-561, His-696, and His-740. The segment at 922 to 1227 (FAFTGQGTFY…QRDTDNWLTL (306 aa)) is malonyl-CoA:ACP transacylase (MAT) domain. Positions 1307–1439 (HRLISEQYTD…VFYEDPSSWL (133 aa)) are N-terminal hotdog fold. The PKS/mFAS DH domain maps to 1307 to 1609 (HRLISEQYTD…FLQWPRVMLN (303 aa)). The segment at 1334 to 1588 (GVVDGHAMNG…FVGDVYVLQG (255 aa)) is product template (PT) domain. The Proton acceptor; for dehydratase activity role is filled by His-1339. The tract at residues 1461-1609 (VTGKASKLTT…FLQWPRVMLN (149 aa)) is C-terminal hotdog fold. Asp-1522 (proton donor; for dehydratase activity) is an active-site residue. The disordered stretch occupies residues 1619 to 1690 (AKPAAKVPGK…MEELPSPPAG (72 aa)). A compositionally biased stretch (basic residues) spans 1635–1647 (PHFKPHHVSRHKP). Positions 1689-1763 (AGMNDDMEKA…TIQDLKALLR (75 aa)) constitute a Carrier domain. Ser-1726 is modified (O-(pantetheine 4'-phosphoryl)serine).

Its function is as follows. Non-reducing polyketide synthase that mediates the biosynthesis of alternariol (AOH), a micotoxin that seems not to be involved in virulence and oxidative stress tolerance. PKS19 alone is sufficient for AOH synthesis which is initiated by priming with acetyl-CoA, followed by sequential condensations of 6 malonyl-CoA units. In Phaeosphaeria nodorum (strain SN15 / ATCC MYA-4574 / FGSC 10173) (Glume blotch fungus), this protein is Non-reducing polyketide synthase PKS19.